A 183-amino-acid chain; its full sequence is Glutathione-regulated potassium-efflux system ancillary protein KefG (183 aa).

It belongs to the NAD(P)H dehydrogenase (quinone) family. KefG subfamily. Interacts with KefB.

It localises to the cell inner membrane. The enzyme catalyses a quinone + NADH + H(+) = a quinol + NAD(+). The catalysed reaction is a quinone + NADPH + H(+) = a quinol + NADP(+). In terms of biological role, regulatory subunit of a potassium efflux system that confers protection against electrophiles. Required for full activity of KefB. The polypeptide is Glutathione-regulated potassium-efflux system ancillary protein KefG (Salmonella enteritidis PT4 (strain P125109)).